The sequence spans 217 residues: Vesicle-associated membrane protein 723 (217 aa).

The Cytoplasmic portion of the chain corresponds to 1-192 (MAQQSLFYSF…KWFQNMKIKL (192 aa)). A Longin domain is found at 10–114 (FIARGTVILV…SLNKEFGSNL (105 aa)). Positions 130 to 186 (NLAKAKAQVSEVKSLMMENIEKVLARGVICEMLGSSESQPQAFYIKRTQMKRKKWFQ) constitute a v-SNARE coiled-coil homology domain. A helical; Anchor for type IV membrane protein transmembrane segment spans residues 193–213 (IVLAIIIALILIIILSVCGGF). Over 214 to 217 (NCGK) the chain is Vesicular.

Belongs to the synaptobrevin family. As to expression, highly expressed in stems and roots. Detected in flowers and leaves.

Its subcellular location is the endoplasmic reticulum membrane. Involved in the targeting and/or fusion of transport vesicles to their target membrane. In Arabidopsis thaliana (Mouse-ear cress), this protein is Vesicle-associated membrane protein 723.